A 291-amino-acid polypeptide reads, in one-letter code: Flavonol synthase/flavanone 3-hydroxylase (291 aa).

Residues 151–250 (CWYVMNINHY…RMSWPVLVSP (100 aa)) enclose the Fe2OG dioxygenase domain. Residues His-175, Asp-177, and His-231 each coordinate Fe cation.

This sequence belongs to the iron/ascorbate-dependent oxidoreductase family. Requires L-ascorbate as cofactor. Fe cation serves as cofactor.

Its subcellular location is the cytoplasm. The catalysed reaction is a (2R,3R)-dihydroflavonol + 2-oxoglutarate + O2 = a flavonol + succinate + CO2 + H2O. It catalyses the reaction a (2S)-flavan-4-one + 2-oxoglutarate + O2 = a (2R,3R)-dihydroflavonol + succinate + CO2. It functions in the pathway secondary metabolite biosynthesis; flavonoid biosynthesis. In terms of biological role, catalyzes the formation of flavonols from dihydroflavonols. It can act on dihydrokaempferol to produce kaempferol, on dihydroquercetin to produce quercitin and on dihydromyricetin to produce myricetin. This is Flavonol synthase/flavanone 3-hydroxylase from Matthiola incana (Common stock).